Reading from the N-terminus, the 401-residue chain is MLKHDSMQVSQDQPIYSEAPLQLLLFVDGRPKSKQQVQRIRAYLKDLQAEYNFELQIIDVGQQPYLAEHFKLVATPALIKIHPEPRQILAGSNIITQLKNLWPRWQAAADTYAKLQEDLQERVDDNGRVAQPQSTINSVAVSAELLRLSDEIFNLKQEKEKLLEQLQFKDRVIAMLVHDLRNPLTAAAIAIETLQSNYNPDIGQFQRLKPALVVNLLRQARTQAKTIDKMIADLLQVGRGTDTELIIIPQKTEIGLLCLEVLGELRDRYTTKAQKVETDIPQDLPCVYADPERIRQVLINLLDNAIKYTPEGGTISIAGLHRTTQKVQFSIGDTGPGIPSDNRERIFENHYRLERDEAKEGYGIGLSLCQRIIRAHYGQIWVDSNPHGGAWFHFTLPVYPS.

One can recognise a Histidine kinase domain in the interval 175-400; sequence MLVHDLRNPL…WFHFTLPVYP (226 aa). His178 is modified (phosphohistidine; by autocatalysis).

As to quaternary structure, homooligomerizes. Interacts with KaiC. Participates in the KaiABC clock complex, whose core is composed of a KaiC homohexamer, 6 KaiB and up to 6 KaiA dimers. SasA and KaiB(fs) compete to bind to KaiC.

The enzyme catalyses ATP + protein L-histidine = ADP + protein N-phospho-L-histidine.. In terms of biological role, member of the two-component regulatory system SasA/RpaA involved in genome-wide circadian gene expression. One of several clock output pathways. Participates in the Kai clock protein complex, the main circadian regulator in cyanobacteria, via its interaction with KaiC. KaiC enhances the autophosphorylation activity of SasA, which then transfers its phosphate group to RpaA to activate it. In addition to its output function, recruits fold-shifted KaiB (KaiB(fs)) to KaiC to cooperatively form the KaiB(6):KaiC(6) complex (independent of SasA kinase activity). Required for robustness of the circadian rhythm of gene expression and is involved in clock output, also required for adaptation to light/dark cycles. This chain is Adaptive-response sensory kinase SasA, found in Nostoc sp. (strain PCC 7120 / SAG 25.82 / UTEX 2576).